Consider the following 212-residue polypeptide: Protein RER1C (212 aa).

Residue methionine 1 is modified to N-acetylmethionine. 4 helical membrane passes run 55–75 (TVPHVLYRWIACLCVVLIYIV), 82–102 (GFYIITYAIGIYLLNLIIAFL), 135–155 (EFKFWLSIIRAFIIGFMMTFF), and 157–177 (VFDVPVFWPILLFYWVMLFFL).

The protein belongs to the RER1 family.

The protein localises to the membrane. In terms of biological role, involved in the retrieval of endoplasmic reticulum membrane proteins from the early Golgi compartment. In Arabidopsis thaliana (Mouse-ear cress), this protein is Protein RER1C (RER1C).